We begin with the raw amino-acid sequence, 138 residues long: Nucleoside diphosphate kinase (138 aa).

ATP is bound by residues K9, F57, R85, T91, R102, and N112. Residue H115 is the Pros-phosphohistidine intermediate of the active site.

The protein belongs to the NDK family. In terms of assembly, homotetramer. Requires Mg(2+) as cofactor.

The protein localises to the cytoplasm. The enzyme catalyses a 2'-deoxyribonucleoside 5'-diphosphate + ATP = a 2'-deoxyribonucleoside 5'-triphosphate + ADP. It catalyses the reaction a ribonucleoside 5'-diphosphate + ATP = a ribonucleoside 5'-triphosphate + ADP. Its function is as follows. Major role in the synthesis of nucleoside triphosphates other than ATP. The ATP gamma phosphate is transferred to the NDP beta phosphate via a ping-pong mechanism, using a phosphorylated active-site intermediate. The chain is Nucleoside diphosphate kinase from Deinococcus radiodurans (strain ATCC 13939 / DSM 20539 / JCM 16871 / CCUG 27074 / LMG 4051 / NBRC 15346 / NCIMB 9279 / VKM B-1422 / R1).